Consider the following 592-residue polypeptide: Probable tubulin polyglutamylase TTLL2 (592 aa).

2 disordered regions span residues 1–23 and 51–77; these read MRGRDLCSSTQSQALGSLRTTTP and GVSIPPRRGRPTPTLEKKKKPHLMAED. Over residues 7 to 23 the composition is skewed to polar residues; sequence CSSTQSQALGSLRTTTP. The 344-residue stretch at 84-427 folds into the TTL domain; that stretch reads LKPLVFRVDE…NGLRNEGREA (344 aa). Residues Lys-212, 218–219, 240–243, and 253–255 contribute to the ATP site; these read RG, QKYI, and KCD. Arg-218 serves as a coordination point for a protein. Arg-279 contributes to the L-glutamate binding site. Residue 298–299 participates in ATP binding; it reads TN. The L-glutamate site is built by Ser-301 and Lys-321. The Mg(2+) site is built by Asp-373, Glu-386, and Asn-388. L-glutamate is bound at residue Lys-404.

This sequence belongs to the tubulin--tyrosine ligase family. Requires Mg(2+) as cofactor. In terms of tissue distribution, testis.

Its function is as follows. Probable tubulin polyglutamylase that generates side chains of glutamate on the gamma-carboxyl group of specific glutamate residues within the C-terminal tail of target proteins. Similar to TTLL1, may acquire enzymatic activity only in complex with other proteins as it is most likely lacking domains important for autonomous activity. Probably involved in the side-chain initiation step of the polyglutamylation reaction rather than the elongation step. The chain is Probable tubulin polyglutamylase TTLL2 from Homo sapiens (Human).